Here is a 269-residue protein sequence, read N- to C-terminus: Ribosomal RNA large subunit methyltransferase E (269 aa).

S-adenosyl-L-methionine is bound by residues G58, W60, D78, D96, and D120. The active-site Proton acceptor is K160. Positions 234–269 (HEKKEGNETSDNDEDNNKNGLMIKKIKELRGKRSKL) are disordered. A compositionally biased stretch (basic and acidic residues) spans 258–269 (KIKELRGKRSKL).

This sequence belongs to the class I-like SAM-binding methyltransferase superfamily. RNA methyltransferase RlmE family.

The protein localises to the cytoplasm. The catalysed reaction is uridine(2552) in 23S rRNA + S-adenosyl-L-methionine = 2'-O-methyluridine(2552) in 23S rRNA + S-adenosyl-L-homocysteine + H(+). Functionally, specifically methylates the uridine in position 2552 of 23S rRNA at the 2'-O position of the ribose in the fully assembled 50S ribosomal subunit. The chain is Ribosomal RNA large subunit methyltransferase E from Methanococcus aeolicus (strain ATCC BAA-1280 / DSM 17508 / OCM 812 / Nankai-3).